A 608-amino-acid chain; its full sequence is 1-deoxy-D-xylulose-5-phosphate synthase (608 aa).

Thiamine diphosphate-binding positions include H66 and 107-109; that span reads GHA. D138 serves as a coordination point for Mg(2+). Residues 139–140, N167, F277, and E350 contribute to the thiamine diphosphate site; that span reads GA. Mg(2+) is bound at residue N167.

The protein belongs to the transketolase family. DXPS subfamily. Homodimer. Mg(2+) is required as a cofactor. Thiamine diphosphate serves as cofactor.

The catalysed reaction is D-glyceraldehyde 3-phosphate + pyruvate + H(+) = 1-deoxy-D-xylulose 5-phosphate + CO2. It functions in the pathway metabolic intermediate biosynthesis; 1-deoxy-D-xylulose 5-phosphate biosynthesis; 1-deoxy-D-xylulose 5-phosphate from D-glyceraldehyde 3-phosphate and pyruvate: step 1/1. Catalyzes the acyloin condensation reaction between C atoms 2 and 3 of pyruvate and glyceraldehyde 3-phosphate to yield 1-deoxy-D-xylulose-5-phosphate (DXP). This chain is 1-deoxy-D-xylulose-5-phosphate synthase, found in Thermotoga maritima (strain ATCC 43589 / DSM 3109 / JCM 10099 / NBRC 100826 / MSB8).